A 179-amino-acid chain; its full sequence is Macro domain-containing protein XAC3343 (179 aa).

The Macro domain maps to 1 to 175 (MRIEVWQGDI…AYQQALATQE (175 aa)).

This sequence belongs to the MacroD-type family.

In Xanthomonas axonopodis pv. citri (strain 306), this protein is Macro domain-containing protein XAC3343.